The chain runs to 134 residues: Cytochrome b (134 aa).

The next 3 membrane-spanning stretches (helical) occupy residues Phe33–Met53, Trp77–Val98, and Trp113–Leu133. Residues His83 and His97 each coordinate heme b.

The protein belongs to the cytochrome b family. In terms of assembly, the cytochrome bc1 complex contains 11 subunits: 3 respiratory subunits (MT-CYB, CYC1 and UQCRFS1), 2 core proteins (UQCRC1 and UQCRC2) and 6 low-molecular weight proteins (UQCRH/QCR6, UQCRB/QCR7, UQCRQ/QCR8, UQCR10/QCR9, UQCR11/QCR10 and a cleavage product of UQCRFS1). This cytochrome bc1 complex then forms a dimer. The cofactor is heme b.

Its subcellular location is the mitochondrion inner membrane. In terms of biological role, component of the ubiquinol-cytochrome c reductase complex (complex III or cytochrome b-c1 complex) that is part of the mitochondrial respiratory chain. The b-c1 complex mediates electron transfer from ubiquinol to cytochrome c. Contributes to the generation of a proton gradient across the mitochondrial membrane that is then used for ATP synthesis. The polypeptide is Cytochrome b (MT-CYB) (Chiroderma trinitatum (Little big-eyed bat)).